Here is a 114-residue protein sequence, read N- to C-terminus: UPF0102 protein HPAG1_0809 (114 aa).

It belongs to the UPF0102 family.

In Helicobacter pylori (strain HPAG1), this protein is UPF0102 protein HPAG1_0809.